The following is a 249-amino-acid chain: 1-(5-phosphoribosyl)-5-[(5-phosphoribosylamino)methylideneamino] imidazole-4-carboxamide isomerase (249 aa).

Asp8 functions as the Proton acceptor in the catalytic mechanism. The Proton donor role is filled by Asp130.

It belongs to the HisA/HisF family.

The protein resides in the cytoplasm. The enzyme catalyses 1-(5-phospho-beta-D-ribosyl)-5-[(5-phospho-beta-D-ribosylamino)methylideneamino]imidazole-4-carboxamide = 5-[(5-phospho-1-deoxy-D-ribulos-1-ylimino)methylamino]-1-(5-phospho-beta-D-ribosyl)imidazole-4-carboxamide. It functions in the pathway amino-acid biosynthesis; L-histidine biosynthesis; L-histidine from 5-phospho-alpha-D-ribose 1-diphosphate: step 4/9. The protein is 1-(5-phosphoribosyl)-5-[(5-phosphoribosylamino)methylideneamino] imidazole-4-carboxamide isomerase of Nitrosococcus oceani (strain ATCC 19707 / BCRC 17464 / JCM 30415 / NCIMB 11848 / C-107).